A 292-amino-acid polypeptide reads, in one-letter code: Bifunctional protein FolD (292 aa).

Residues 161–163 (GRS) and Ile-231 contribute to the NADP(+) site.

Belongs to the tetrahydrofolate dehydrogenase/cyclohydrolase family. As to quaternary structure, homodimer.

It carries out the reaction (6R)-5,10-methylene-5,6,7,8-tetrahydrofolate + NADP(+) = (6R)-5,10-methenyltetrahydrofolate + NADPH. It catalyses the reaction (6R)-5,10-methenyltetrahydrofolate + H2O = (6R)-10-formyltetrahydrofolate + H(+). Its pathway is one-carbon metabolism; tetrahydrofolate interconversion. Catalyzes the oxidation of 5,10-methylenetetrahydrofolate to 5,10-methenyltetrahydrofolate and then the hydrolysis of 5,10-methenyltetrahydrofolate to 10-formyltetrahydrofolate. In Protochlamydia amoebophila (strain UWE25), this protein is Bifunctional protein FolD.